A 710-amino-acid chain; its full sequence is MLFRSVMNKPRLGYGQKGAPFTYPLQSLLQCYQCVKQDEHISYGELGMPVPPFGCAFSTVPDMSHVLAVANEEGIVRLYDTECRDMQRLLMKEFMAHTNAVFDIAWVPGEHKLVTASGDQTAKLWDVMAGELIGECRGHQCSLKSVSFSKFERAVFSTGGRDGNIMMWDTRCSKKDGFYRQVNQITGAHNAIDKQTPSKMKKRKPSIRGLAPSVDSQQSVTVVIFQDEYTIISAGAVDGVVKIWDLRKNYSAYRQDPVPVKHFPYPGNSTRKLGYSSLVLDPTGTNLFASCTDDNVYMFNATGLKTDPVSIFRGHQNSTFYIKASVSPDGQFLLSGSSDHSAYIWQVSDPMAAPVTLMGHCQEVTSVAWCQSDFTKIATCSDDNTVRVWRLKRSCEDSSESDKRDSVGWACKKKFEPSSMAANLCTPGKPSVMSSSSLTSSPTPASCAPSNTGDLPMPSSTPISALLPDPKLQTPKRINNGGLGVSPKQMSSSKMSIKDWVTRTPKSSTRTDTKTPSPRKAFTPVEQYPSVSSARVQLPYEKRAKRRLETSSEYAEHVCPDNCNCVRELEPGLKKAKLDVCFIDKERDSSDDKCLRLSDLSKGFDQELSPSPSTSLHMNATENLLQLGPLSELKSVLLDKENSSPEKNWLSALGHKFKSSPQNKASGSPSSRTSTTKKQQPRNAPNSPVSVPTPPGSMRKICTYFFKKSE.

WD repeat units lie at residues 47–89, 96–135, and 138–178; these read GMPV…MQRL, AHTNAVFDIAWVPGEHKLVTASGDQTAKLWDVMAGELIGE, and GHQC…KDGF. The short motif at 168-171 is the DDB1-binding motif element; the sequence is WDTR. The Nuclear localization signal motif lies at 197–204; the sequence is PSKMKKRK. 4 WD repeats span residues 215 to 254, 270 to 309, 314 to 355, and 359 to 398; these read DSQQSVTVVIFQDEYTIISAGAVDGVVKIWDLRKNYSAYR, TRKLGYSSLVLDPTGTNLFASCTDDNVYMFNATGLKTDPV, GHQN…AAPV, and GHCQEVTSVAWCQSDFTKIATCSDDNTVRVWRLKRSCEDS. The short motif at 244 to 247 is the DDB1-binding motif element; that stretch reads WDLR. Disordered regions lie at residues 428-534 and 652-698; these read GKPS…VSSA and ALGH…PGSM. A compositionally biased stretch (low complexity) spans 430 to 450; sequence PSVMSSSSLTSSPTPASCAPS. Polar residues-rich tracts occupy residues 504–516 and 659–690; these read TPKSSTRTDTKTP and SSPQNKASGSPSSRTSTTKKQQPRNAPNSPVS.

It belongs to the WD repeat cdt2 family. Component of the DCX(DTL) E3 ubiquitin ligase complex, at least composed of cul4 (cul4a or cul4b), ddb1, dtl/cdt2 and rbx1.

The protein resides in the nucleus. The protein localises to the cytoplasm. It is found in the cytoskeleton. It localises to the microtubule organizing center. Its subcellular location is the centrosome. The protein resides in the chromosome. The protein operates within protein modification; protein ubiquitination. In terms of biological role, substrate-specific adapter of a DCX (DDB1-CUL4-X-box) E3 ubiquitin-protein ligase complex required for cell cycle control, DNA damage response and translesion DNA synthesis. The DCX(DTL) complex, also named CRL4(CDT2) complex, mediates the polyubiquitination and subsequent degradation of CDT1, CDKN1A/p21(CIP1), KMT5A and SDE2. CDT1 degradation in response to DNA damage is necessary to ensure proper cell cycle regulation of DNA replication. CDKN1A/p21(CIP1) degradation during S phase or following UV irradiation is essential to control replication licensing. KMT5A degradation is also important for a proper regulation of mechanisms such as TGF-beta signaling, cell cycle progression, DNA repair and cell migration. Most substrates require their interaction with PCNA for their polyubiquitination: substrates interact with PCNA via their PIP-box, and those containing the 'K+4' motif in the PIP box, recruit the DCX(DTL) complex, leading to their degradation. In undamaged proliferating cells, the DCX(DTL) complex also promotes the 'Lys-164' monoubiquitination of PCNA, thereby being involved in PCNA-dependent translesion DNA synthesis. May play a role in the regulation of the circadian clock. This chain is Denticleless protein homolog A (dtl-a), found in Xenopus laevis (African clawed frog).